The following is a 308-amino-acid chain: Tryptophan 2,3-dioxygenase (308 aa).

A disordered region spans residues 1–35 (MQPPGDNAPAGCPFSGAHAAQPAHEAPHVPGDAAG). A compositionally biased stretch (low complexity) spans 17 to 30 (AHAAQPAHEAPHVP). Residues 77–81 (FIIQH), tyrosine 139, and arginine 143 contribute to the substrate site. Histidine 266 is a heme binding site. A substrate-binding site is contributed by threonine 280.

The protein belongs to the tryptophan 2,3-dioxygenase family. As to quaternary structure, homotetramer. Heme is required as a cofactor.

The catalysed reaction is L-tryptophan + O2 = N-formyl-L-kynurenine. Its pathway is amino-acid degradation; L-tryptophan degradation via kynurenine pathway; L-kynurenine from L-tryptophan: step 1/2. Its function is as follows. Heme-dependent dioxygenase that catalyzes the oxidative cleavage of the L-tryptophan (L-Trp) pyrrole ring and converts L-tryptophan to N-formyl-L-kynurenine. Catalyzes the oxidative cleavage of the indole moiety. The chain is Tryptophan 2,3-dioxygenase from Burkholderia ambifaria (strain ATCC BAA-244 / DSM 16087 / CCUG 44356 / LMG 19182 / AMMD) (Burkholderia cepacia (strain AMMD)).